Here is a 673-residue protein sequence, read N- to C-terminus: Fatty acyl-CoA synthetase B (673 aa).

The N-terminal stretch at 1–18 is a signal peptide; it reads MINNWLAVGLLVVSGILA. An N-linked (GlcNAc...) asparagine glycan is attached at asparagine 267.

This sequence belongs to the ATP-dependent AMP-binding enzyme family.

It localises to the endoplasmic reticulum. It catalyses the reaction a long-chain fatty acid + ATP + CoA = a long-chain fatty acyl-CoA + AMP + diphosphate. Its function is as follows. Long chain fatty acid acyl-CoA synthetases catalyze the formation of a thiester bond between a free fatty acid and coenzyme A during fatty acid metabolic process. This is Fatty acyl-CoA synthetase B (fcsB) from Dictyostelium discoideum (Social amoeba).